The primary structure comprises 122 residues: Large ribosomal subunit protein uL14 (122 aa).

Belongs to the universal ribosomal protein uL14 family. Part of the 50S ribosomal subunit. Forms a cluster with proteins L3 and L19. In the 70S ribosome, L14 and L19 interact and together make contacts with the 16S rRNA in bridges B5 and B8.

Its function is as follows. Binds to 23S rRNA. Forms part of two intersubunit bridges in the 70S ribosome. The polypeptide is Large ribosomal subunit protein uL14 (Bradyrhizobium diazoefficiens (strain JCM 10833 / BCRC 13528 / IAM 13628 / NBRC 14792 / USDA 110)).